The chain runs to 579 residues: Threonylcarbamoyladenosine tRNA methylthiotransferase (579 aa).

Serine 53 is subject to Phosphoserine. The region spanning 64-172 (QKIWIRTWGC…VVEVVEETIK (109 aa)) is the MTTase N-terminal domain. [4Fe-4S] cluster is bound by residues cysteine 73 and cysteine 109. Serine 122 carries the phosphoserine modification. Residues cysteine 138, cysteine 214, cysteine 218, and cysteine 221 each contribute to the [4Fe-4S] cluster site. The 232-residue stretch at 200–431 (RKNPLIEIIS…RVFHSYSPYD (232 aa)) folds into the Radical SAM core domain. One can recognise a TRAM domain in the interval 431-493 (DHKIGERQQV…KHFMKGQPVS (63 aa)). A Phosphothreonine modification is found at threonine 499. Residues 556 to 578 (CALRMSVGLALLGLLFAFFVKVY) traverse the membrane as a helical segment.

The protein belongs to the methylthiotransferase family. CDKAL1 subfamily. [4Fe-4S] cluster serves as cofactor. As to expression, expressed in pancreatic islets.

The protein resides in the endoplasmic reticulum membrane. The catalysed reaction is N(6)-L-threonylcarbamoyladenosine(37) in tRNA + (sulfur carrier)-SH + AH2 + 2 S-adenosyl-L-methionine = 2-methylsulfanyl-N(6)-L-threonylcarbamoyladenosine(37) in tRNA + (sulfur carrier)-H + 5'-deoxyadenosine + L-methionine + A + S-adenosyl-L-homocysteine + 2 H(+). Catalyzes the methylthiolation of N6-threonylcarbamoyladenosine (t(6)A), leading to the formation of 2-methylthio-N6-threonylcarbamoyladenosine (ms(2)t(6)A) at position 37 in tRNAs that read codons beginning with adenine. In Homo sapiens (Human), this protein is Threonylcarbamoyladenosine tRNA methylthiotransferase (CDKAL1).